The sequence spans 682 residues: Two-component system protein A (682 aa).

The disordered stretch occupies residues 11-41; that stretch reads SLDDNDNGQQHQDEVQAKHQDQGHTCPSRPS. The segment covering 21-32 has biased composition (basic and acidic residues); it reads HQDEVQAKHQDQ. PAS domains lie at 45–105 and 166–239; these read LSRI…PILY and MNET…LREG. The region spanning 241–292 is the PAC domain; that stretch reads IEDEGWRYRRDGSRFWANVLITPIYQFGQHVGFVKVTRDLTERKEAEACMIA. The Histidine kinase domain maps to 307–530; that stretch reads NISHEIRTPM…VFWFTAKMGG (224 aa). Phosphohistidine; by autocatalysis is present on H310. Positions 563–680 constitute a Response regulatory domain; it reads HVLLVEDNIV…QLLRVLWKWF (118 aa). D615 carries the 4-aspartylphosphate modification.

In terms of processing, activation probably requires a transfer of a phosphate group between a His in the histidine kinase domain and an Asp of the response regulatory domain.

The protein resides in the cytoplasm. It catalyses the reaction ATP + protein L-histidine = ADP + protein N-phospho-L-histidine.. Its function is as follows. May be part of a two-component regulatory system required for formation of conidia on certain growth media. This Emericella nidulans (strain FGSC A4 / ATCC 38163 / CBS 112.46 / NRRL 194 / M139) (Aspergillus nidulans) protein is Two-component system protein A.